The sequence spans 207 residues: Small ribosomal subunit protein uS4c (207 aa).

The region spanning 92–156 (MRLDNILFRL…YQSIITKRIE (65 aa)) is the S4 RNA-binding domain.

Belongs to the universal ribosomal protein uS4 family. As to quaternary structure, part of the 30S ribosomal subunit. Contacts protein S5. The interaction surface between S4 and S5 is involved in control of translational fidelity.

The protein localises to the plastid. The protein resides in the chloroplast. One of the primary rRNA binding proteins, it binds directly to 16S rRNA where it nucleates assembly of the body of the 30S subunit. In terms of biological role, with S5 and S12 plays an important role in translational accuracy. The sequence is that of Small ribosomal subunit protein uS4c (rps4) from Equisetum palustre (Marsh horsetail).